The following is a 476-amino-acid chain: PRAME family member 6 (476 aa).

Residues Arg-97–Cys-124 form an LRR 1; degenerate repeat. Residues His-179–Asn-203 form an LRR 2; degenerate repeat. One copy of the LRR 3; degenerate repeat lies at Leu-204 to His-230. Residues Met-231–Lys-266 form an LRR 4; degenerate repeat. LRR repeat units follow at residues Leu-267 to Leu-292, Lys-293 to Lys-324, Thr-325 to Leu-345, Ala-349 to Arg-376, and Cys-377 to His-401.

Belongs to the PRAME family. Component of a CRL2 E3 ubiquitin-protein ligase complex, also named ECS (Elongin BC-CUL2/5-SOCS-box protein) complex, composed of CUL2, Elongin BC (ELOB and ELOC), RBX1 and substrate-specific adapter PRAMEF6.

Its pathway is protein modification; protein ubiquitination. Functionally, substrate-recognition component of a Cul2-RING (CRL2) E3 ubiquitin-protein ligase complex, which mediates ubiquitination of target proteins, leading to their degradation. The CRL2(PRAMEF6) complex mediates ubiquitination and degradation of truncated MSRB1/SEPX1 selenoproteins produced by failed UGA/Sec decoding. The protein is PRAME family member 6 of Homo sapiens (Human).